The chain runs to 445 residues: Peptide chain release factor 1, mitochondrial (445 aa).

Residues 1–61 constitute a mitochondrion transit peptide; the sequence is MNRHLCVWLF…LLSKNWSRRY (61 aa). A GGQ domain region spans residues 297-361; sequence PKDLRIDTFR…LRARLYQQII (65 aa). Positions 311-313 match the GGQ motif; the sequence is GGQ. Glutamine 313 is modified (N5-methylglutamine).

The protein belongs to the prokaryotic/mitochondrial release factor family. Post-translationally, methylation of glutamine in the GGQ triplet by HEMK1 is conserved from bacteria to mammals.

The protein localises to the mitochondrion. Mitochondrial peptide chain release factor that directs the termination of translation in response to the peptide chain non-canonical stop codons AGG and AGA. Non-canonical termination codons AGG and AGA are found at the end of MT-CO1/COX1 and MT-ND6/ND6 open reading frames, respectively. Recognizes non-canonical stop codons via a network of interactions between the codon, MTRF1 and the ribosomal RNA (rRNA): in contrast to other translation release factors, which identify the codon in the A-site via direct interactions of amino acid side chains with the bases, MTRF1 repositions the first 2 bases of the stop codon to use an intricate network of interactions that includes residues of the release factor, the rRNA of the small ribosomal subunit, as well as neighboring bases of the mRNA. In Homo sapiens (Human), this protein is Peptide chain release factor 1, mitochondrial.